A 622-amino-acid chain; its full sequence is Glucose 1,6-bisphosphate synthase (622 aa).

Residues Arg-73 and Ser-175 each coordinate alpha-D-glucose 1,6-bisphosphate. Ser-175 functions as the Phosphoserine intermediate in the catalytic mechanism. Mg(2+) is bound by residues Ser-175, Asp-332, and Asp-334. Ser-175 bears the Phosphoserine mark. Asp-336, Arg-337, Glu-434, Ser-436, and Lys-448 together coordinate alpha-D-glucose 1,6-bisphosphate.

Belongs to the phosphohexose mutase family.

The protein localises to the cytoplasm. It is found in the cytosol. The enzyme catalyses (2R)-3-phospho-glyceroyl phosphate + alpha-D-glucose 1-phosphate = alpha-D-glucose 1,6-bisphosphate + (2R)-3-phosphoglycerate + H(+). It catalyses the reaction alpha-D-glucose 6-phosphate + (2R)-3-phospho-glyceroyl phosphate = alpha-D-glucose 1,6-bisphosphate + (2R)-3-phosphoglycerate + H(+). The catalysed reaction is (2R)-3-phospho-glyceroyl phosphate + alpha-D-ribose 1-phosphate = alpha-D-ribose 1,5-bisphosphate + (2R)-3-phosphoglycerate + H(+). It carries out the reaction 2-deoxy-alpha-D-ribose 1-phosphate + (2R)-3-phospho-glyceroyl phosphate = 2-deoxy-alpha-D-ribose 1,5-bisphosphate + (2R)-3-phosphoglycerate + H(+). The enzyme catalyses (2R)-3-phospho-glyceroyl phosphate + alpha-D-mannose 1-phosphate = alpha-D-mannose 1,6-bisphosphate + (2R)-3-phosphoglycerate + H(+). In terms of biological role, glucose 1,6-bisphosphate synthase using 1,3-bisphosphoglycerate as a phosphate donor and a series of 1-phosphate sugars, including glucose 1-phosphate, mannose 1-phosphate, ribose 1-phosphate and deoxyribose 1-phosphate, as acceptors. In vitro, also exhibits very low phosphopentomutase and phosphoglucomutase activity which are most probably not physiologically relevant. In Homo sapiens (Human), this protein is Glucose 1,6-bisphosphate synthase.